The following is a 337-amino-acid chain: U11/U12 small nuclear ribonucleoprotein 48 kDa protein (337 aa).

Residues 55 to 82 form a CHHC U11-48K-type zinc finger; sequence IAICPYDSNHRMPKSSLTKHMESCRLRK. Residues Cys-58, His-64, His-74, and Cys-78 each coordinate Zn(2+). Glycyl lysine isopeptide (Lys-Gly) (interchain with G-Cter in SUMO2) cross-links involve residues Lys-87 and Lys-104. Residues 255–276 are compositionally biased toward basic and acidic residues; that stretch reads HWQEEQGRAGDAAEKNEERRSA. A disordered region spans residues 255–337; the sequence is HWQEEQGRAG…HSHKRRKQKI (83 aa). Over residues 294-310 the composition is skewed to basic residues; it reads RHRRARSRSPHKRKRNK. Positions 311 to 326 are enriched in basic and acidic residues; the sequence is DKSSESRRRKERDGER. Residues 327-337 show a composition bias toward basic residues; sequence HHSHKRRKQKI.

Component of the U11/U12 snRNPs that are part of the U12-type spliceosome. Not found in the major spliceosome.

The protein resides in the nucleus. In terms of biological role, likely involved in U12-type 5' splice site recognition. The polypeptide is U11/U12 small nuclear ribonucleoprotein 48 kDa protein (Snrnp48) (Mus musculus (Mouse)).